The following is a 284-amino-acid chain: Tropomyosin (284 aa).

Residues 1–284 (MDAIKKKMVA…DATFAELAGY (284 aa)) are a coiled coil. Residues 32–41 (TEEAKAKIED) show a composition bias toward basic and acidic residues. The segment at 32-60 (TEEAKAKIEDDYNSLQKKSIQTENDLDNT) is disordered. The span at 44 to 60 (NSLQKKSIQTENDLDNT) shows a compositional bias: polar residues.

Belongs to the tropomyosin family. As to quaternary structure, homodimer.

Its function is as follows. Tropomyosin, in association with the troponin complex, plays a central role in the calcium dependent regulation of muscle contraction. This is Tropomyosin from Mytilus edulis (Blue mussel).